The primary structure comprises 395 residues: Elongation factor Tu (395 aa).

The tr-type G domain occupies 10–205 (KPHVNIGTIG…CDTWIPLPPR (196 aa)). A G1 region spans residues 19–26 (GHVDHGKT). 19–26 (GHVDHGKT) provides a ligand contact to GTP. T26 provides a ligand contact to Mg(2+). The G2 stretch occupies residues 60 to 64 (GITIN). The segment at 81-84 (DCPG) is G3. GTP is bound by residues 81–85 (DCPGH) and 136–139 (NKCD). A G4 region spans residues 136 to 139 (NKCD). Residues 174-176 (SAL) form a G5 region.

Belongs to the TRAFAC class translation factor GTPase superfamily. Classic translation factor GTPase family. EF-Tu/EF-1A subfamily. In terms of assembly, monomer.

It is found in the cytoplasm. It catalyses the reaction GTP + H2O = GDP + phosphate + H(+). Functionally, GTP hydrolase that promotes the GTP-dependent binding of aminoacyl-tRNA to the A-site of ribosomes during protein biosynthesis. The sequence is that of Elongation factor Tu from Parabacteroides distasonis (strain ATCC 8503 / DSM 20701 / CIP 104284 / JCM 5825 / NCTC 11152).